The primary structure comprises 259 residues: uncharacterized protein (259 aa).

It belongs to the chlamydial CPn_0128/CT_035/TC_0305 family.

This is an uncharacterized protein from Chlamydia muridarum (strain MoPn / Nigg).